Here is a 296-residue protein sequence, read N- to C-terminus: Haloalkane dehalogenase (296 aa).

One can recognise an AB hydrolase-1 domain in the interval 31-155 (PILFQHGNPT…QDRDLFQAFR (125 aa)). The active-site Nucleophile is Asp-108. Glu-132 functions as the Proton donor in the catalytic mechanism. His-272 functions as the Proton acceptor in the catalytic mechanism.

It belongs to the haloalkane dehalogenase family. Type 2 subfamily. Monomer.

The protein resides in the periplasm. The catalysed reaction is 1-haloalkane + H2O = a halide anion + a primary alcohol + H(+). It catalyses the reaction (3R,6R)-1,3,4,6-tetrachlorocyclohexa-1,4-diene + 2 H2O = 2,5-dichlorocyclohexa-2,5-dien-1,4-diol + 2 chloride + 2 H(+). It functions in the pathway xenobiotic degradation; gamma-hexachlorocyclohexane degradation. Its function is as follows. Catalyzes hydrolytic cleavage of carbon-halogen bonds in halogenated aliphatic compounds, leading to the formation of the corresponding primary alcohols, halide ions and protons. Is involved in the degradation of the important environmental pollutant gamma-hexachlorocyclohexane (gamma-HCH or lindane) as it also catalyzes conversion of 1,3,4,6-tetrachloro-1,4-cyclohexadiene (1,4-TCDN) to 2,5-dichloro-2,5-cyclohexadiene-1,4-diol (2,5-DDOL) via the intermediate 2,4,5-trichloro-2,5-cyclohexadiene-1-ol (2,4,5-DNOL). The protein is Haloalkane dehalogenase of Sphingobium indicum (strain DSM 16412 / CCM 7286 / MTCC 6364 / B90A).